A 421-amino-acid polypeptide reads, in one-letter code: MSKTHLTEQKFSDFALHPKVVEALEKKGFHNCTPIQALALPLTLAGRDVAGQAQTGTGKTMAFLTSTFHCLLSHPAIADRKVNQPRALIMAPTRELAVQIHADAEPLAEATGLKLGLAYGGDGYDKQLKVLESGVDILIGTTGRLIDYAKQNHINLGAIQVVVLDEADRMYDLGFIKDIRWLFRRMPPANQRLNMLFSATLSYRVRELAFEQMNNAEYIEVEPEQKTGHRIKEELFYPSNEEKMRLLQTLIEEEWPDRAIIFANTKHRCEEIWGHLAADGHRVGLLTGDVAQKKRLRILDEFTRGDLDILVATDVAARGLHIPAVTHVFNYDLPDDCEDYVHRIGRTGRAGASGHSISLACEEYALNLPAIETYIGHSIPVSKYNPDALMTDLPKPLRLTRPRTGNGPRRTGAPRNRRRSG.

The short motif at 9–37 (QKFSDFALHPKVVEALEKKGFHNCTPIQA) is the Q motif element. The Helicase ATP-binding domain maps to 40–219 (LPLTLAGRDV…FEQMNNAEYI (180 aa)). 53–60 (AQTGTGKT) is an ATP binding site. The DEAD box motif lies at 165–168 (DEAD). Residues 245–390 (RLLQTLIEEE…VSKYNPDALM (146 aa)) enclose the Helicase C-terminal domain. The disordered stretch occupies residues 392 to 421 (DLPKPLRLTRPRTGNGPRRTGAPRNRRRSG). Residues 402–414 (PRTGNGPRRTGAP) are compositionally biased toward low complexity.

The protein belongs to the DEAD box helicase family. RhlB subfamily. As to quaternary structure, component of the RNA degradosome, which is a multiprotein complex involved in RNA processing and mRNA degradation.

The protein localises to the cytoplasm. The enzyme catalyses ATP + H2O = ADP + phosphate + H(+). Functionally, DEAD-box RNA helicase involved in RNA degradation. Has RNA-dependent ATPase activity and unwinds double-stranded RNA. This is ATP-dependent RNA helicase RhlB from Escherichia coli O157:H7 (strain EC4115 / EHEC).